We begin with the raw amino-acid sequence, 266 residues long: Endoplasmic reticulum vesicle protein 25 (266 aa).

Positions 1-26 are cleaved as a signal peptide; sequence MGSSPQSSTRTLLGLLFLLLVQLSSA. Topologically, residues 27 to 188 are lumenal; sequence LKFDLHASSG…TNESTNERVK (162 aa). The region spanning 39–129 is the GOLD domain; that stretch reads ERCIRNFVFK…YKSVELDVEI (91 aa). The chain crosses the membrane as a helical span at residues 189–209; sequence WFAFGTMGMLVGLGVWQVVYL. The Cytoplasmic segment spans residues 210 to 266; that stretch reads RAYFRYVDFPVSWRVDGVVANCCSCCEQVEASYLRSSRVVFWSPLVMWTRLSWLILR.

This sequence belongs to the EMP24/GP25L family.

It localises to the endoplasmic reticulum membrane. Its subcellular location is the golgi apparatus membrane. Its function is as follows. Constituent of COPII-coated endoplasmic reticulum-derived transport vesicles. Required for efficient transport of a subset of secretory proteins to the Golgi. Facilitates retrograde transport from the Golgi to the endoplasmic reticulum. In Aspergillus fumigatus (strain ATCC MYA-4609 / CBS 101355 / FGSC A1100 / Af293) (Neosartorya fumigata), this protein is Endoplasmic reticulum vesicle protein 25 (erv25).